The sequence spans 362 residues: Fructose-bisphosphate aldolase (362 aa).

Serine 65 is a D-glyceraldehyde 3-phosphate binding site. Aspartate 112 serves as the catalytic Proton donor. Residues histidine 113, aspartate 147, glutamate 177, and histidine 229 each contribute to the Zn(2+) site. Dihydroxyacetone phosphate is bound at residue glycine 230. Residue histidine 268 participates in Zn(2+) binding. Dihydroxyacetone phosphate contacts are provided by residues 269–271 (GGS) and 290–293 (NVDT).

This sequence belongs to the class II fructose-bisphosphate aldolase family. Homodimer. Zn(2+) is required as a cofactor.

The catalysed reaction is beta-D-fructose 1,6-bisphosphate = D-glyceraldehyde 3-phosphate + dihydroxyacetone phosphate. Its pathway is carbohydrate degradation; glycolysis; D-glyceraldehyde 3-phosphate and glycerone phosphate from D-glucose: step 4/4. In terms of biological role, catalyzes the aldol condensation of dihydroxyacetone phosphate (DHAP or glycerone-phosphate) with glyceraldehyde 3-phosphate (G3P) to form fructose 1,6-bisphosphate (FBP) in gluconeogenesis and the reverse reaction in glycolysis. This Aspergillus oryzae (strain ATCC 42149 / RIB 40) (Yellow koji mold) protein is Fructose-bisphosphate aldolase (fbaA).